The primary structure comprises 167 residues: S-ribosylhomocysteine lyase (167 aa).

Residues His-54, His-58, and Cys-128 each coordinate Fe cation.

Belongs to the LuxS family. As to quaternary structure, homodimer. Requires Fe cation as cofactor.

The enzyme catalyses S-(5-deoxy-D-ribos-5-yl)-L-homocysteine = (S)-4,5-dihydroxypentane-2,3-dione + L-homocysteine. Its function is as follows. Involved in the synthesis of autoinducer 2 (AI-2) which is secreted by bacteria and is used to communicate both the cell density and the metabolic potential of the environment. The regulation of gene expression in response to changes in cell density is called quorum sensing. Catalyzes the transformation of S-ribosylhomocysteine (RHC) to homocysteine (HC) and 4,5-dihydroxy-2,3-pentadione (DPD). The sequence is that of S-ribosylhomocysteine lyase from Haemophilus influenzae (strain PittGG).